The primary structure comprises 555 residues: Glutamine--tRNA ligase (555 aa).

Positions 35-45 match the 'HIGH' region motif; it reads PEPNGYLHIGH. ATP-binding positions include 36 to 38 and 42 to 48; these read EPN and HIGHAKS. L-glutamine-binding residues include aspartate 68 and tyrosine 213. ATP-binding positions include threonine 232 and 262-263; that span reads RL. The short motif at 269–273 is the 'KMSKS' region element; that stretch reads ITSKR.

It belongs to the class-I aminoacyl-tRNA synthetase family. As to quaternary structure, monomer.

It is found in the cytoplasm. It catalyses the reaction tRNA(Gln) + L-glutamine + ATP = L-glutaminyl-tRNA(Gln) + AMP + diphosphate. The chain is Glutamine--tRNA ligase from Stutzerimonas stutzeri (strain A1501) (Pseudomonas stutzeri).